Reading from the N-terminus, the 344-residue chain is Outer membrane protein B (344 aa).

Positions Met-1–Ala-30 are cleaved as a signal peptide.

The protein belongs to the chlamydial OMP family.

The protein resides in the cell outer membrane. The sequence is that of Outer membrane protein B (ompB) from Chlamydia pneumoniae (Chlamydophila pneumoniae).